A 365-amino-acid polypeptide reads, in one-letter code: Ribosomal RNA large subunit methyltransferase F (365 aa).

Residues 1-50 form a disordered region; the sequence is MSKPAVKSVPSATAKTATRAVNIRQKVKAPKQAKPEAKGRAKPSKDKPRA. Over residues 33-50 the composition is skewed to basic and acidic residues; sequence AKPEAKGRAKPSKDKPRA.

This sequence belongs to the methyltransferase superfamily. METTL16/RlmF family.

The protein resides in the cytoplasm. The catalysed reaction is adenosine(1618) in 23S rRNA + S-adenosyl-L-methionine = N(6)-methyladenosine(1618) in 23S rRNA + S-adenosyl-L-homocysteine + H(+). In terms of biological role, specifically methylates the adenine in position 1618 of 23S rRNA. The sequence is that of Ribosomal RNA large subunit methyltransferase F from Shewanella baltica (strain OS155 / ATCC BAA-1091).